We begin with the raw amino-acid sequence, 382 residues long: Chaperone protein DnaJ (382 aa).

The region spanning 5–70 is the J domain; it reads DYYELLGVQK…EKRAAYDRYG (66 aa). The segment at 146–224 adopts a CR-type zinc-finger fold; the sequence is GAEKEISFRK…CHGEGRVRRT (79 aa). Positions 159, 162, 176, 179, 198, 201, 212, and 215 each coordinate Zn(2+). CXXCXGXG motif repeat units lie at residues 159–166, 176–183, 198–205, and 212–219; these read CERCDGSG, CPTCRGAG, CPTCGGMG, and CTVCHGEG. Positions 230–250 are disordered; it reads RIPPGVDNGSRLRSSGNGEAG.

It belongs to the DnaJ family. Homodimer. It depends on Zn(2+) as a cofactor.

It localises to the cytoplasm. Its function is as follows. Participates actively in the response to hyperosmotic and heat shock by preventing the aggregation of stress-denatured proteins and by disaggregating proteins, also in an autonomous, DnaK-independent fashion. Unfolded proteins bind initially to DnaJ; upon interaction with the DnaJ-bound protein, DnaK hydrolyzes its bound ATP, resulting in the formation of a stable complex. GrpE releases ADP from DnaK; ATP binding to DnaK triggers the release of the substrate protein, thus completing the reaction cycle. Several rounds of ATP-dependent interactions between DnaJ, DnaK and GrpE are required for fully efficient folding. Also involved, together with DnaK and GrpE, in the DNA replication of plasmids through activation of initiation proteins. This chain is Chaperone protein DnaJ, found in Opitutus terrae (strain DSM 11246 / JCM 15787 / PB90-1).